Reading from the N-terminus, the 513-residue chain is ATP synthase subunit alpha 1 (513 aa).

169–176 contacts ATP; sequence GDRQTGKT.

Belongs to the ATPase alpha/beta chains family. As to quaternary structure, F-type ATPases have 2 components, CF(1) - the catalytic core - and CF(0) - the membrane proton channel. CF(1) has five subunits: alpha(3), beta(3), gamma(1), delta(1), epsilon(1). CF(0) has three main subunits: a(1), b(2) and c(9-12). The alpha and beta chains form an alternating ring which encloses part of the gamma chain. CF(1) is attached to CF(0) by a central stalk formed by the gamma and epsilon chains, while a peripheral stalk is formed by the delta and b chains.

It localises to the cell inner membrane. The catalysed reaction is ATP + H2O + 4 H(+)(in) = ADP + phosphate + 5 H(+)(out). In terms of biological role, produces ATP from ADP in the presence of a proton gradient across the membrane. The alpha chain is a regulatory subunit. This is ATP synthase subunit alpha 1 from Nitrosospira multiformis (strain ATCC 25196 / NCIMB 11849 / C 71).